Reading from the N-terminus, the 331-residue chain is Olfactory receptor 7E178 (331 aa).

At 1–47 (MMDRYSFIMHQHRDDTVWCPSKIEEQNITRISEFHLMGLSDDLQLQP) the chain is on the extracellular side. N27 is a glycosylation site (N-linked (GlcNAc...) asparagine). The helical transmembrane segment at 48-68 (ILFGLFLSMYLVTLLGNLLII) threads the bilayer. The Cytoplasmic segment spans residues 69–80 (LTVSSDSHLHSP). A helical membrane pass occupies residues 81–100 (MYFFLSNLSLADVSFTSTTL). The Extracellular segment spans residues 101–119 (PKMIVDIQTHNRAISYSGC). C119 and C201 form a disulfide bridge. Residues 120 to 140 (LTQMSFFMLFGCLDSLLLTAM) form a helical membrane-spanning segment. Residues 141–164 (AYDRFVAICHPLHYQFIMNPRLCG) are Cytoplasmic-facing. The chain crosses the membrane as a helical span at residues 165–185 (LLVFLSVLISLFVSQLHNSVV). Topologically, residues 186-218 (LQLTYFKSVDISHFFCDPSQLLNLACSDTFTNN) are extracellular. Residues 219-239 (IVMYFVGAISGFLPISGIFFS) traverse the membrane as a helical segment. Residues 240-266 (YYKIVSSILRMPSPGGKYKAFSTCGSH) are Cytoplasmic-facing. The helical transmembrane segment at 267 to 287 (LSVVCLFYGTGLGVYLSSAVS) threads the bilayer. The Extracellular portion of the chain corresponds to 288-293 (LSPRKG). The chain crosses the membrane as a helical span at residues 294–314 (AVASIVYTVVTPMLNPFIYSL). Topologically, residues 315–331 (RNQDIKRAMWRLLRKTV) are cytoplasmic.

This sequence belongs to the G-protein coupled receptor 1 family.

Its subcellular location is the cell membrane. Its function is as follows. Odorant receptor. This Mus musculus (Mouse) protein is Olfactory receptor 7E178.